The sequence spans 766 residues: Pentatricopeptide repeat-containing protein At3g61520, mitochondrial (766 aa).

A mitochondrion-targeting transit peptide spans 1 to 30 (MSIMLSISRRRNSYILLNHSRFLRRFSYDV). 16 PPR repeats span residues 151-181 (TVVATNLLIRWFGRMGMVNQSVLVYERLDSN), 184-218 (NSQVRNVVVDVLLRNGLVDDAFKVLDEMLQKESVF), 221-257 (NRITADIVLHEVWKGRLLTEEKIIALISRFSSHGVSP), 258-292 (NSVWLTRFISSLCKNARANAAWDILSDLMKNKTPL), 293-327 (EAPPFNALLSCLGRNMDISRMNDLVLKMDEVKIRP), 328-358 (DVVTLGILINTLCKSRRVDEALEVFEKMRGK), 369-404 (DSIHFNTLIDGLCKVGRLKEAEELLVRMKLEERCAP), 405-439 (NAVTYNCLIDGYCRAGKLETAKEVVSRMKEDEIKP), 440-474 (NVVTVNTIVGGMCRHHGLNMAVVFFMDMEKEGVKG), 475-509 (NVVTYMTLIHACCSVSNVEKAMYWYEKMLEAGCSP), 510-544 (DAKIYYALISGLCQVRRDHDAIRVVEKLKEGGFSL), 545-579 (DLLAYNMLIGLFCDKNNTEKVYEMLTDMEKEGKKP), 580-614 (DSITYNTLISFFGKHKDFESVERMMEQMREDGLDP), 615-650 (TVTTYGAVIDAYCSVGELDEALKLFKDMGLHSKVNP), 651-685 (NTVIYNILINAFSKLGNFGQALSLKEEMKMKMVRP), and 686-720 (NVETYNALFKCLNEKTQGETLLKLMDEMVEQSCEP).

The protein belongs to the PPR family. P subfamily.

It is found in the mitochondrion. The sequence is that of Pentatricopeptide repeat-containing protein At3g61520, mitochondrial from Arabidopsis thaliana (Mouse-ear cress).